The following is a 536-amino-acid chain: Apolipoprotein N-acyltransferase (536 aa).

7 helical membrane passes run 10–30, 42–62, 76–96, 107–127, 136–158, 181–201, and 212–232; these read IASG…LLAG, AWPV…GSAA, WWFG…AFLV, AAIC…FALA, LRIL…LLTG, IGIW…AVLI, and AVPA…GIRL. Residues 248–501 enclose the CN hydrolase domain; that stretch reads MQPNLPQDAR…EGVLDSGLPA (254 aa). The active-site Proton acceptor is glutamate 295. The active site involves lysine 360. Cysteine 413 acts as the Nucleophile in catalysis. The helical transmembrane segment at 509–529 threads the bilayer; sequence ARVGELPAAVLVALVMMLVLL.

The protein belongs to the CN hydrolase family. Apolipoprotein N-acyltransferase subfamily.

The protein localises to the cell inner membrane. It carries out the reaction N-terminal S-1,2-diacyl-sn-glyceryl-L-cysteinyl-[lipoprotein] + a glycerophospholipid = N-acyl-S-1,2-diacyl-sn-glyceryl-L-cysteinyl-[lipoprotein] + a 2-acyl-sn-glycero-3-phospholipid + H(+). It functions in the pathway protein modification; lipoprotein biosynthesis (N-acyl transfer). Functionally, catalyzes the phospholipid dependent N-acylation of the N-terminal cysteine of apolipoprotein, the last step in lipoprotein maturation. This Rhodopseudomonas palustris (strain ATCC BAA-98 / CGA009) protein is Apolipoprotein N-acyltransferase.